The sequence spans 395 residues: Beta-1,4-galactosyltransferase 3 (395 aa).

Topologically, residues 1–10 (MLRRLLERPC) are cytoplasmic. Residues 11-31 (TLALLVGSQLAVMMYLSLGGF) traverse the membrane as a helical; Signal-anchor for type II membrane protein segment. Residues 32 to 395 (RSLSALFGRD…ANHTAPHGSH (364 aa)) are Lumenal-facing. An N-linked (GlcNAc...) asparagine glycan is attached at Asn-57. An intrachain disulfide couples Cys-79 to Cys-121. UDP-alpha-D-galactose-binding positions include 132–136 (PHRAR), 171–173 (FNR), 198–199 (VD), Tyr-228, and Trp-260. Residues Cys-192 and Cys-211 are joined by a disulfide bond. Asp-199 is a Mn(2+) binding site. 262 to 265 (GEDD) lines the N-acetyl-D-glucosamine pocket. Residue His-293 participates in Mn(2+) binding. A UDP-alpha-D-galactose-binding site is contributed by 293–295 (HRG). Residue Arg-305 participates in N-acetyl-D-glucosamine binding. 2 N-linked (GlcNAc...) asparagine glycosylation sites follow: Asn-339 and Asn-387. The disordered stretch occupies residues 341–395 (TADIGTDPRGPRAPSGPRYPPGSSQAFRQEMLQRRPPARPGPLPTANHTAPHGSH).

Belongs to the glycosyltransferase 7 family. It depends on Mn(2+) as a cofactor.

It localises to the golgi apparatus. The protein localises to the golgi stack membrane. The enzyme catalyses an N-acetyl-beta-D-glucosaminyl derivative + UDP-alpha-D-galactose = a beta-D-galactosyl-(1-&gt;4)-N-acetyl-beta-D-glucosaminyl derivative + UDP + H(+). It carries out the reaction N-acetyl-D-glucosamine + UDP-alpha-D-galactose = beta-D-galactosyl-(1-&gt;4)-N-acetyl-D-glucosamine + UDP + H(+). The catalysed reaction is a beta-D-GlcNAc-(1-&gt;3)-beta-D-Gal-(1-&gt;4)-beta-D-Glc-(1&lt;-&gt;1)-Cer(d18:1(4E)) + UDP-alpha-D-galactose = a neolactoside nLc4Cer(d18:1(4E)) + UDP + H(+). It catalyses the reaction a beta-D-glucosylceramide + UDP-alpha-D-galactose = a beta-D-galactosyl-(1-&gt;4)-beta-D-glucosyl-(1&lt;-&gt;1)-ceramide + UDP + H(+). The enzyme catalyses a neolactoside IV(3)-beta-GlcNAc-nLc4Cer + UDP-alpha-D-galactose = a neolactoside nLc6Cer + UDP + H(+). Its pathway is protein modification; protein glycosylation. Responsible for the synthesis of complex-type N-linked oligosaccharides in many glycoproteins as well as the carbohydrate moieties of glycolipids. This is Beta-1,4-galactosyltransferase 3 (B4GALT3) from Cricetulus griseus (Chinese hamster).